Here is a 61-residue protein sequence, read N- to C-terminus: Large ribosomal subunit protein eL37 (61 aa).

Zn(2+) is bound by residues Cys19, Cys22, Cys34, and Cys37. The C4-type zinc finger occupies 19–37 (CRRCGRNSFNVRKGYCAAC).

It belongs to the eukaryotic ribosomal protein eL37 family. Zn(2+) serves as cofactor.

In terms of biological role, binds to the 23S rRNA. The chain is Large ribosomal subunit protein eL37 (rpl37e) from Sulfurisphaera tokodaii (strain DSM 16993 / JCM 10545 / NBRC 100140 / 7) (Sulfolobus tokodaii).